The chain runs to 209 residues: Large ribosomal subunit protein uL3 (209 aa).

Positions H126–P148 are disordered.

The protein belongs to the universal ribosomal protein uL3 family. In terms of assembly, part of the 50S ribosomal subunit. Forms a cluster with proteins L14 and L19.

Its function is as follows. One of the primary rRNA binding proteins, it binds directly near the 3'-end of the 23S rRNA, where it nucleates assembly of the 50S subunit. This is Large ribosomal subunit protein uL3 from Listeria innocua serovar 6a (strain ATCC BAA-680 / CLIP 11262).